A 217-amino-acid chain; its full sequence is Probable coenzyme A transferase subunit beta (217 aa).

Glu-50 is a catalytic residue.

This sequence belongs to the 3-oxoacid CoA-transferase subunit B family. In terms of assembly, heterodimer of a subunit alpha and a subunit beta.

The polypeptide is Probable coenzyme A transferase subunit beta (yodR) (Bacillus subtilis (strain 168)).